The chain runs to 424 residues: Tol-Pal system protein TolB (424 aa).

A signal peptide spans 1 to 24 (MNKARAIARWISFLLLIAAGQVCA).

It belongs to the TolB family. The Tol-Pal system is composed of five core proteins: the inner membrane proteins TolA, TolQ and TolR, the periplasmic protein TolB and the outer membrane protein Pal. They form a network linking the inner and outer membranes and the peptidoglycan layer.

Its subcellular location is the periplasm. Part of the Tol-Pal system, which plays a role in outer membrane invagination during cell division and is important for maintaining outer membrane integrity. This Methylococcus capsulatus (strain ATCC 33009 / NCIMB 11132 / Bath) protein is Tol-Pal system protein TolB.